Here is a 377-residue protein sequence, read N- to C-terminus: Cytoplasmic tRNA 2-thiolation protein 1 (377 aa).

This sequence belongs to the TtcA family. CTU1/NCS6/ATPBD3 subfamily.

It localises to the cytoplasm. It participates in tRNA modification; 5-methoxycarbonylmethyl-2-thiouridine-tRNA biosynthesis. Plays a central role in 2-thiolation of mcm(5)S(2)U at tRNA wobble positions of tRNA(Lys), tRNA(Glu) and tRNA(Gln). Directly binds tRNAs and probably acts by catalyzing adenylation of tRNAs, an intermediate required for 2-thiolation. It is unclear whether it acts as a sulfurtransferase that transfers sulfur from thiocarboxylated URM1 onto the uridine of tRNAs at wobble position. Prior mcm(5) tRNA modification by the elongator complex is required for 2-thiolation. May also be involved in protein urmylation. The polypeptide is Cytoplasmic tRNA 2-thiolation protein 1 (Debaryomyces hansenii (strain ATCC 36239 / CBS 767 / BCRC 21394 / JCM 1990 / NBRC 0083 / IGC 2968) (Yeast)).